A 148-amino-acid chain; its full sequence is Small ribosomal subunit protein eS19 (148 aa).

A compositionally biased stretch (basic residues) spans 79–90; sequence HGSTKNRGSRPA. 2 disordered regions span residues 79-98 and 116-148; these read HGSTKNRGSRPAHHVDASGA and DEEKGGRRITQSGQRDLDRIAKTTVDEEEEDDE. Residues 130-140 show a composition bias toward basic and acidic residues; that stretch reads RDLDRIAKTTV.

This sequence belongs to the eukaryotic ribosomal protein eS19 family.

The polypeptide is Small ribosomal subunit protein eS19 (rps19) (Emericella nidulans (strain FGSC A4 / ATCC 38163 / CBS 112.46 / NRRL 194 / M139) (Aspergillus nidulans)).